The following is a 483-amino-acid chain: Protein hedgehog (483 aa).

The first 19 residues, 1 to 19 (MDNQTVAAIWSCASATCLS), serve as a signal peptide directing secretion. The propeptide occupies 20–92 (LDAKRHSVET…LALNFRHAHS (73 aa)). The tract at residues 28–57 (ETNTNDRQAPPGLSNSNNNNNNNKSTAVDA) is disordered. A compositionally biased stretch (low complexity) spans 41 to 50 (SNSNNNNNNN). Residue Cys-93 is the site of N-palmitoyl cysteine attachment. The Ca(2+) site is built by Glu-157, Glu-158, Asp-163, Thr-193, Glu-194, Asp-197, and Asp-199. Gly-266 carries Cholesterol glycine ester lipidation.

This sequence belongs to the hedgehog family. As to quaternary structure, interacts with shf. In terms of processing, the C-terminal part of the hedgehog protein precursor displays an autoproteolysis activity that results in the cleavage of the full-length protein into two parts (N-product and C-product). In addition, the C-terminal part displays a cholesterol transferase activity that results by the covalent attachment of a cholesterol moiety to the C-terminal of the newly generated N-product. The N-product is the active species in both local and long-range signaling, whereas the C-product has no signaling activity. Post-translationally, cholesterylation is required for N-product targeting to lipid rafts and multimerization. N-palmitoylation by Rasp of the hedgehog N-product, within the secretory pathway, is required for the embryonic and larval patterning activities of the hedgehog signal.

It is found in the nucleus. The protein localises to the cytoplasm. Its subcellular location is the cell membrane. It catalyses the reaction glycyl-L-cysteinyl-[protein] + cholesterol + H(+) = [protein]-C-terminal glycyl cholesterol ester + N-terminal L-cysteinyl-[protein]. Functionally, the C-terminal part of the hedgehog protein precursor displays an autoproteolysis activity that results in the cleavage of the full-length protein into two parts (N-product and C-product). In addition, the C-terminal part displays a cholesterol transferase activity that results by the covalent attachment of a cholesterol moiety to the C-terminal of the newly generated N-product. Once cleaved, the C-product has no signaling activity and diffuses from the cell. In terms of biological role, the dually lipidated hedgehog protein N-product is a morphogen which is essential for a variety of patterning events during development. Establishes the anterior-posterior axis of the embryonic segments and patterns the larval imaginal disks. Binds to the patched (ptc) receptor, which functions in association with smoothened (smo), to activate the transcription of target genes wingless (wg), decapentaplegic (dpp) and ptc. In the absence of hh, ptc represses the constitutive signaling activity of smo through fused (fu). Essential component of a signaling pathway which regulates the Duox-dependent gut immune response to bacterial uracil; required to activate Cad99C-dependent endosome formation, norpA-dependent Ca2+ mobilization and p38 MAPK, which are essential steps in the Duox-dependent production of reactive oxygen species (ROS) in response to intestinal bacterial infection. During photoreceptor differentiation, it up-regulates transcription of Ubr3, which in turn promotes the hh-signaling pathway by mediating the ubiquitination and degradation of cos. The polypeptide is Protein hedgehog (Drosophila virilis (Fruit fly)).